Consider the following 281-residue polypeptide: Plasmanylethanolamine desaturase (281 aa).

Residues 1–28 lie on the Cytoplasmic side of the membrane; it reads MKTQEIEKKVRQQDAQVLAQGYSPAIRA. Residues 29–45 form a helical membrane-spanning segment; the sequence is MEIAAIVSFVSLEVALV. Over 46–58 the chain is Periplasmic; sequence YRLWGTPYAGTWL. The chain crosses the membrane as a helical span at residues 59 to 75; it reads LLSAVLLGYLAADFVSG. Residues 76 to 123 are Cytoplasmic-facing; that stretch reads FVHWMGDTWGSTEMPVLGKALIRPFREHHVDEKAITRHDFVETNGNNC. The helical transmembrane segment at 124–138 threads the bilayer; sequence LISLPVAIIALCLPM. At 139–142 the chain is on the periplasmic side; it reads SGPG. The helical transmembrane segment at 143-159 threads the bilayer; it reads WVFCASFLGAMIFWVMA. The Cytoplasmic portion of the chain corresponds to 160-281; the sequence is TNQFHKWSHM…VQEKPASTRP (122 aa). A Histidine box-1 motif is present at residues 164 to 168; the sequence is HKWSH. Positions 191–195 match the Histidine box-2 motif; the sequence is HRIHH.

Belongs to the fatty acid desaturase CarF family. In terms of assembly, interacts with CarR.

The protein resides in the cell inner membrane. The catalysed reaction is a 1-(1,2-saturated alkyl)-2-acyl-sn-glycero-3-phosphoethanolamine + 2 Fe(II)-[cytochrome b5] + O2 + 2 H(+) = a 1-O-(1Z-alkenyl)-2-acyl-sn-glycero-3-phosphoethanolamine + 2 Fe(III)-[cytochrome b5] + 2 H2O. It carries out the reaction 1-O-(13-methyltetradecyl)-2-(13-methyltetradecanoyl)-sn-glycero-3-phosphoethanolamine + 2 Fe(II)-[cytochrome b5] + O2 + 2 H(+) = 1-O-(1Z-13-methyltetradecenyl)-2-(13-methyltetradecanoyl)-sn-glycero-3-phosphoethanolamine + 2 Fe(III)-[cytochrome b5] + 2 H2O. Plasmanylethanolamine desaturase involved in plasmalogen biogenesis in the membrane, required for light-induced carotenogenesis. Plasmalogens are glycerophospholipids with a hydrocarbon chain linked by a vinyl ether bond at the glycerol sn-1 position, and are involved in antioxidative and signaling mechanisms, most precisely in sensing photooxidative stress through singlet oxygen. Participates in the light-dependent inactivation of the antisigma factor CarR. Mediates signaling by singlet oxygen, generated via photoexcited protoporphyrin IX. The protein is Plasmanylethanolamine desaturase of Myxococcus xanthus.